The chain runs to 132 residues: MVAMFLAVAVVLGLATSPTAEGGKATTEEQKLIEDVNASFRAAMATTANVPPADKYKTFEAAFTVSSKRNLADAVSKAPQLVPKLDEVYNAAYNAADHAAPEDKYEAFVLHFSEALRIIAGTPEVHAVKPGA.

Positions 1–22 are cleaved as a signal peptide; the sequence is MVAMFLAVAVVLGLATSPTAEG.

This sequence belongs to the Poa p IX/Phl p VI allergen family.

This Phleum pratense (Common timothy) protein is Pollen allergen Phl p 6 (PHLPVI).